The primary structure comprises 131 residues: Large ribosomal subunit protein bL20 (131 aa).

This sequence belongs to the bacterial ribosomal protein bL20 family.

In terms of biological role, binds directly to 23S ribosomal RNA and is necessary for the in vitro assembly process of the 50S ribosomal subunit. It is not involved in the protein synthesizing functions of that subunit. The sequence is that of Large ribosomal subunit protein bL20 from Mycolicibacterium paratuberculosis (strain ATCC BAA-968 / K-10) (Mycobacterium paratuberculosis).